We begin with the raw amino-acid sequence, 934 residues long: Serine/threonine-protein kinase PknD (934 aa).

Residues 4–296 (YELIRLIGKG…ELRQALQPYL (293 aa)) form the Protein kinase domain. ATP is bound by residues 10 to 18 (IGKGGMGEV) and Lys33. Residue Asp138 is the Proton acceptor of the active site.

It belongs to the protein kinase superfamily. Ser/Thr protein kinase family. In terms of assembly, interacts with Pkn1. Autophosphorylated on serine and threonine residues.

The catalysed reaction is L-seryl-[protein] + ATP = O-phospho-L-seryl-[protein] + ADP + H(+). The enzyme catalyses L-threonyl-[protein] + ATP = O-phospho-L-threonyl-[protein] + ADP + H(+). Functionally, together with the serine/threonine kinase Pkn1, may play a role in the specific interactions with host proteins during intracellular growth. Autophosphorylates and also phosphorylates Pkn1. This Chlamydia trachomatis serovar D (strain ATCC VR-885 / DSM 19411 / UW-3/Cx) protein is Serine/threonine-protein kinase PknD.